The sequence spans 647 residues: Threonine--tRNA ligase (647 aa).

A TGS domain is found at 1–61 (MINITFPDGA…TEDGSIEIVT (61 aa)). The tract at residues 242–540 (DHRKLGKELD…LIENYKGAFP (299 aa)) is catalytic. The Zn(2+) site is built by cysteine 336, histidine 387, and histidine 517.

The protein belongs to the class-II aminoacyl-tRNA synthetase family. As to quaternary structure, homodimer. The cofactor is Zn(2+).

It localises to the cytoplasm. The enzyme catalyses tRNA(Thr) + L-threonine + ATP = L-threonyl-tRNA(Thr) + AMP + diphosphate + H(+). Functionally, catalyzes the attachment of threonine to tRNA(Thr) in a two-step reaction: L-threonine is first activated by ATP to form Thr-AMP and then transferred to the acceptor end of tRNA(Thr). Also edits incorrectly charged L-seryl-tRNA(Thr). In Streptococcus pneumoniae (strain JJA), this protein is Threonine--tRNA ligase.